Reading from the N-terminus, the 837-residue chain is E3 ubiquitin-protein ligase bre-1 (837 aa).

Positions Met-1–Pro-33 are disordered. The tract at residues Met-1–Glu-313 is interaction with ubc-1. Coiled coils occupy residues Thr-54–Phe-89 and His-185–Arg-253. A disordered region spans residues Gly-269 to Thr-302. Residues Ala-277 to Ala-287 show a composition bias toward polar residues. 3 coiled-coil regions span residues Ser-300 to Ser-397, Asp-458 to Thr-651, and Val-677 to Val-763. The RING-type zinc-finger motif lies at Cys-785–Asn-824.

The protein belongs to the BRE1 family. In terms of assembly, interacts with ubc-1. Interacts with mrg-1. In terms of tissue distribution, in adult animals, expressed in oocytes, germ cells, pharyngeal and intestinal cells.

Its subcellular location is the nucleus. The catalysed reaction is S-ubiquitinyl-[E2 ubiquitin-conjugating enzyme]-L-cysteine + [acceptor protein]-L-lysine = [E2 ubiquitin-conjugating enzyme]-L-cysteine + N(6)-ubiquitinyl-[acceptor protein]-L-lysine.. It functions in the pathway protein modification; protein ubiquitination. Functionally, E3 ubiquitin-protein ligase that mediates monoubiquitination of 'Lys-117' of histone H2B. H2B 'Lys-117' ubiquitination gives a specific tag for epigenetic transcriptional activation and is also prerequisite for histone H3 'Lys-4' and 'Lys-79' methylation. Involved in regulating stem cell proliferative fate. This is E3 ubiquitin-protein ligase bre-1 (rfp-1) from Caenorhabditis elegans.